The primary structure comprises 807 residues: ATP-binding cassette sub-family F member 1 (807 aa).

Positions 1-227 (MPKGPKQQPP…KEKAKKAEQM (227 aa)) are disordered. S22 carries the phosphoserine modification. A compositionally biased stretch (basic residues) spans 29–39 (KKGKKDKKTKK). Residues 47-65 (VEDRQAGEEEKVLKEKEQQ) show a composition bias toward basic and acidic residues. A compositionally biased stretch (basic residues) spans 73–85 (QKKKRDTRKGRRK). S106 carries the post-translational modification Phosphoserine. S110 and S141 each carry phosphoserine; by CK2. Residues 148 to 161 (EKHPPKPAKPEKNR) show a composition bias toward basic and acidic residues. Position 167 is a phosphoserine (S167). A compositionally biased stretch (acidic residues) spans 197 to 207 (LDDEEEQDEEE). The segment covering 208 to 227 (IKEKEPPKQGKEKAKKAEQM) has biased composition (basic and acidic residues). The region spanning 266–510 (IKLEKFSISA…MYQQKQKELL (245 aa)) is the ABC transporter 1 domain. 298-305 (GPNGKGKT) is an ATP binding site. Residues 521–542 (KELKAGGKSTKQAEKQTKEALT) show a composition bias toward basic and acidic residues. Residues 521 to 564 (KELKAGGKSTKQAEKQTKEALTRKQQKCRRKNQDEESQEAPELL) are disordered. Residue S557 is modified to Phosphoserine. The region spanning 587-802 (LGLHGVTFGY…VLEALGEVMV (216 aa)) is the ABC transporter 2 domain. 620 to 627 (GPNGVGKS) provides a ligand contact to ATP.

This sequence belongs to the ABC transporter superfamily. ABCF family. EF3 subfamily. Interacts (via N-terminus) with EIF2S1; the interaction is independent of its phosphorylated status. Associates (via both ABC transporter domains) with the ribosomes. Post-translationally, phosphorylated at phosphoserine and phosphothreonine. Phosphorylation on Ser-110 and Ser-141 by CK2; inhibits association of EIF2 with ribosomes.

The protein resides in the cytoplasm. It is found in the nucleus. The protein localises to the nucleoplasm. Its subcellular location is the nucleus envelope. Functionally, required for efficient Cap- and IRES-mediated mRNA translation initiation. Not involved in the ribosome biogenesis. The chain is ATP-binding cassette sub-family F member 1 (ABCF1) from Sus scrofa (Pig).